Consider the following 120-residue polypeptide: V-type proton ATPase subunit F (120 aa).

Belongs to the V-ATPase F subunit family. In terms of assembly, V-ATPase is a heteromultimeric enzyme composed of a peripheral catalytic V1 complex (components A to H) attached to an integral membrane V0 proton pore complex (components: a, c, c', c'' and d).

Subunit of the peripheral V1 complex of vacuolar ATPase essential for assembly or catalytic function. V-ATPase is responsible for acidifying a variety of intracellular compartments in eukaryotic cells. The polypeptide is V-type proton ATPase subunit F (vatF) (Dictyostelium discoideum (Social amoeba)).